The primary structure comprises 356 residues: Nicotinate-nucleotide--dimethylbenzimidazole phosphoribosyltransferase (356 aa).

The Proton acceptor role is filled by glutamate 317.

Belongs to the CobT family. Homodimer.

It catalyses the reaction 5,6-dimethylbenzimidazole + nicotinate beta-D-ribonucleotide = alpha-ribazole 5'-phosphate + nicotinate + H(+). Its pathway is nucleoside biosynthesis; alpha-ribazole biosynthesis; alpha-ribazole from 5,6-dimethylbenzimidazole: step 1/2. Catalyzes the synthesis of alpha-ribazole-5'-phosphate from nicotinate mononucleotide (NAMN) and 5,6-dimethylbenzimidazole (DMB). The sequence is that of Nicotinate-nucleotide--dimethylbenzimidazole phosphoribosyltransferase from Salmonella paratyphi A (strain AKU_12601).